Reading from the N-terminus, the 211-residue chain is ATP phosphoribosyltransferase (211 aa).

This sequence belongs to the ATP phosphoribosyltransferase family. Short subfamily. In terms of assembly, heteromultimer composed of HisG and HisZ subunits.

The protein localises to the cytoplasm. The catalysed reaction is 1-(5-phospho-beta-D-ribosyl)-ATP + diphosphate = 5-phospho-alpha-D-ribose 1-diphosphate + ATP. It functions in the pathway amino-acid biosynthesis; L-histidine biosynthesis; L-histidine from 5-phospho-alpha-D-ribose 1-diphosphate: step 1/9. Functionally, catalyzes the condensation of ATP and 5-phosphoribose 1-diphosphate to form N'-(5'-phosphoribosyl)-ATP (PR-ATP). Has a crucial role in the pathway because the rate of histidine biosynthesis seems to be controlled primarily by regulation of HisG enzymatic activity. The chain is ATP phosphoribosyltransferase from Pseudomonas putida (strain ATCC 700007 / DSM 6899 / JCM 31910 / BCRC 17059 / LMG 24140 / F1).